A 195-amino-acid chain; its full sequence is MNPVYSPGSSGVPYANAKGIGYPAGFPMGYAAAAPAYSPNMYAGPNPAFQPGYTPGTPYKVSCSPTSGTVPPYSSSPNPYQTAVYPVRSAYPQQNPYAQQGAYYTQPLYAAPPHVIHHTTVVQPNGMPATMYPAPIPQPRGNGVAMGMVAGTTMAMSAGTLLTSHYPTPVAPHQVTMPTYRPPGTPTYSYVPPQW.

The Cytoplasmic portion of the chain corresponds to 1–18 (MNPVYSPGSSGVPYANAK). Residues 19–43 (GIGYPAGFPMGYAAAAPAYSPNMYA) traverse the membrane as a helical segment. Topologically, residues 44–143 (GPNPAFQPGY…APIPQPRGNG (100 aa)) are extracellular. Residues 144–162 (VAMGMVAGTTMAMSAGTLL) form a helical membrane-spanning segment. Residues 163 to 195 (TSHYPTPVAPHQVTMPTYRPPGTPTYSYVPPQW) lie on the Cytoplasmic side of the membrane.

The protein belongs to the FAM168 family.

The protein localises to the cytoplasm. It is found in the perinuclear region. Its subcellular location is the cell membrane. The protein resides in the cell projection. It localises to the axon. Inhibitor of neuronal axonal outgrowth. The protein is Myelin-associated neurite-outgrowth inhibitor (fam168b) of Xenopus tropicalis (Western clawed frog).